We begin with the raw amino-acid sequence, 127 residues long: Large ribosomal subunit protein uL22 (127 aa).

This sequence belongs to the universal ribosomal protein uL22 family. In terms of assembly, part of the 50S ribosomal subunit.

This protein binds specifically to 23S rRNA; its binding is stimulated by other ribosomal proteins, e.g. L4, L17, and L20. It is important during the early stages of 50S assembly. It makes multiple contacts with different domains of the 23S rRNA in the assembled 50S subunit and ribosome. Its function is as follows. The globular domain of the protein is located near the polypeptide exit tunnel on the outside of the subunit, while an extended beta-hairpin is found that lines the wall of the exit tunnel in the center of the 70S ribosome. The sequence is that of Large ribosomal subunit protein uL22 from Rhizorhabdus wittichii (strain DSM 6014 / CCUG 31198 / JCM 15750 / NBRC 105917 / EY 4224 / RW1) (Sphingomonas wittichii).